The chain runs to 192 residues: MSKPSDRINLTNQFLIAMPNMADPTFSGTVVYLCDHSERGALGLVINRPTDIDLESLFNRIDLKLDIEPLLHIPVYFGGPVQTERGFVLHEPVEGANYNSSMSVEGGLEMTTSKDVLEAVATGTGPKRFLLTLGHAGWGAGQLEEEISRNGWLTVAADPRIVFDTPAEERFEAALGLLGVSSSMLSGEAGHA.

It belongs to the UPF0301 (AlgH) family.

The sequence is that of UPF0301 protein Bamb_0737 from Burkholderia ambifaria (strain ATCC BAA-244 / DSM 16087 / CCUG 44356 / LMG 19182 / AMMD) (Burkholderia cepacia (strain AMMD)).